Consider the following 244-residue polypeptide: Leucyl/phenylalanyl-tRNA--protein transferase (244 aa).

The disordered stretch occupies residues 1–22 (MHSQPYLLSPAPNNTPFPPAEH).

The protein belongs to the L/F-transferase family.

It is found in the cytoplasm. It catalyses the reaction N-terminal L-lysyl-[protein] + L-leucyl-tRNA(Leu) = N-terminal L-leucyl-L-lysyl-[protein] + tRNA(Leu) + H(+). The catalysed reaction is N-terminal L-arginyl-[protein] + L-leucyl-tRNA(Leu) = N-terminal L-leucyl-L-arginyl-[protein] + tRNA(Leu) + H(+). It carries out the reaction L-phenylalanyl-tRNA(Phe) + an N-terminal L-alpha-aminoacyl-[protein] = an N-terminal L-phenylalanyl-L-alpha-aminoacyl-[protein] + tRNA(Phe). Its function is as follows. Functions in the N-end rule pathway of protein degradation where it conjugates Leu, Phe and, less efficiently, Met from aminoacyl-tRNAs to the N-termini of proteins containing an N-terminal arginine or lysine. This Xylella fastidiosa (strain M12) protein is Leucyl/phenylalanyl-tRNA--protein transferase.